The sequence spans 978 residues: Mineralocorticoid receptor (978 aa).

Positions Met-1–Ile-602 are modulating. Positions Ser-234–Asn-243 are enriched in polar residues. 2 disordered regions span residues Ser-234 to Gly-331 and Gly-353 to Val-372. Phosphoserine occurs at positions 250, 259, 283, 287, and 299. Low complexity predominate over residues Ser-259–Pro-300. The segment covering Ala-301–Gly-331 has biased composition (polar residues). Zn(2+) is bound by residues Cys-603, Cys-606, Cys-620, Cys-623, Cys-637, Cys-643, Cys-653, and Cys-656. 2 consecutive NR C4-type zinc fingers follow at residues Cys-603–Cys-623 and Cys-637–Cys-661. Positions Cys-603–Met-666 form a DNA-binding region, nuclear receptor. The interval Asn-667–Pro-719 is hinge. Residues Gly-681–Ala-706 are disordered. Over residues Gln-688 to Ser-697 the composition is skewed to pro residues. An NR LBD domain is found at Gln-720–Ile-958. Residues Asn-764 and Gln-770 each contribute to the 21-hydroxyprogesterone site. Aldosterone contacts are provided by Asn-764 and Gln-770. Progesterone is bound by residues Asn-764 and Gln-770. The tract at residues Lys-776 to Lys-779 is important for coactivator binding. Residues Arg-811 and Thr-939 each coordinate 21-hydroxyprogesterone. Aldosterone-binding residues include Arg-811 and Thr-939. Progesterone is bound by residues Arg-811 and Thr-939.

Belongs to the nuclear hormone receptor family. NR3 subfamily. Heteromultimeric cytoplasmic complex with HSP90, HSP70, and FKBP4, in the absence of ligand. After ligand binding, it translocates to the nucleus and binds to DNA as a homodimer and as a heterodimer with NR3C1. Binds the coactivator NCOA2. May interact with HSD11B2 in the absence of ligand. Binds the coactivators NCOA1, TIF1 and NRIP1. Phosphorylated. As to expression, expressed in heart and kidney.

Its subcellular location is the cytoplasm. It localises to the nucleus. The protein resides in the endoplasmic reticulum membrane. In terms of biological role, receptor for both mineralocorticoids (MC) such as aldosterone and glucocorticoids (GC) such as corticosterone or cortisol. Binds to mineralocorticoid response elements (MRE) and transactivates target genes. The effect of MC is to increase ion and water transport and thus raise extracellular fluid volume and blood pressure and lower potassium levels. This is Mineralocorticoid receptor (Nr3c2) from Mus musculus (Mouse).